The chain runs to 284 residues: Mevalonate kinase (284 aa).

86–96 (PIGSGLGSSAA) provides a ligand contact to ATP. The active-site Proton acceptor is Asp137.

This sequence belongs to the GHMP kinase family. Mevalonate kinase subfamily. Homodimer. Mg(2+) is required as a cofactor.

Its subcellular location is the cytoplasm. The enzyme catalyses (R)-mevalonate + ATP = (R)-5-phosphomevalonate + ADP + H(+). It functions in the pathway isoprenoid biosynthesis; isopentenyl diphosphate biosynthesis via mevalonate pathway; isopentenyl diphosphate from (R)-mevalonate: step 1/3. Its function is as follows. Catalyzes the phosphorylation of (R)-mevalonate (MVA) to (R)-mevalonate 5-phosphate (MVAP). Functions in the mevalonate (MVA) pathway leading to isopentenyl diphosphate (IPP), a key precursor for the biosynthesis of isoprenoid compounds such as archaeal membrane lipids. This is Mevalonate kinase from Archaeoglobus fulgidus (strain ATCC 49558 / DSM 4304 / JCM 9628 / NBRC 100126 / VC-16).